Here is an 885-residue protein sequence, read N- to C-terminus: DNA mismatch repair protein MutS (885 aa).

626–633 (GPNMGGKS) lines the ATP pocket.

It belongs to the DNA mismatch repair MutS family.

This protein is involved in the repair of mismatches in DNA. It is possible that it carries out the mismatch recognition step. This protein has a weak ATPase activity. This Burkholderia orbicola (strain MC0-3) protein is DNA mismatch repair protein MutS.